Reading from the N-terminus, the 116-residue chain is MTRVKRGYIAKKRRKKILAFVSGSRGAHSKLFRVANQQKSRALVSAHRDRLKRKRDFRRLWITRINAASRANGVSYNKFIQFLYKRQLLTNRRTLAQIAVLNNNCFSMMLENILVS.

This sequence belongs to the bacterial ribosomal protein bL20 family.

Its subcellular location is the plastid. The protein resides in the chloroplast. Binds directly to 23S ribosomal RNA and is necessary for the in vitro assembly process of the 50S ribosomal subunit. It is not involved in the protein synthesizing functions of that subunit. The protein is Large ribosomal subunit protein bL20c of Cryptomeria japonica (Japanese cedar).